The chain runs to 371 residues: 2-aminoethylphosphonate--pyruvate transaminase (371 aa).

Residue lysine 195 is modified to N6-(pyridoxal phosphate)lysine.

This sequence belongs to the class-V pyridoxal-phosphate-dependent aminotransferase family. PhnW subfamily. In terms of assembly, homodimer. Pyridoxal 5'-phosphate is required as a cofactor.

It catalyses the reaction (2-aminoethyl)phosphonate + pyruvate = phosphonoacetaldehyde + L-alanine. Functionally, involved in phosphonate degradation. The sequence is that of 2-aminoethylphosphonate--pyruvate transaminase from Pseudomonas aeruginosa (strain UCBPP-PA14).